The sequence spans 597 residues: Nucleolar protein 58 (597 aa).

The Nop domain occupies 285-410; it reads IAPNMTELVG…LENNLRQLEG (126 aa). The segment at 452 to 597 is disordered; that stretch reads AEAPKKPLIQ…KKKKKKSSKE (146 aa). Residues 482–499 are compositionally biased toward basic residues; the sequence is KSKKDKKEKKEKKDKKAK. Residues 532 to 551 show a composition bias toward basic and acidic residues; it reads IKEDGTLEILSKKDFKGKDA. Residues 552–561 show a composition bias toward acidic residues; sequence EAEEEAEEEE. Residues 588-597 are compositionally biased toward basic residues; sequence KKKKKKSSKE.

This sequence belongs to the NOP5/NOP56 family.

The protein localises to the nucleus. Its subcellular location is the nucleolus. Functionally, required for pre-18S rRNA processing. May bind microtubules. In Neurospora crassa (strain ATCC 24698 / 74-OR23-1A / CBS 708.71 / DSM 1257 / FGSC 987), this protein is Nucleolar protein 58 (nop-58).